We begin with the raw amino-acid sequence, 762 residues long: Phosphoribosylformylglycinamidine synthase subunit PurL (762 aa).

His-58 is an active-site residue. Tyr-61 and Arg-105 together coordinate ATP. Glu-107 provides a ligand contact to Mg(2+). Substrate contacts are provided by residues 108 to 111 (SHNH) and Arg-130. Residue His-109 is the Proton acceptor of the active site. Mg(2+) is bound at residue Asp-131. Gln-255 is a binding site for substrate. Asp-283 contributes to the Mg(2+) binding site. 327–329 (ESQ) provides a ligand contact to substrate. ATP contacts are provided by Asn-513 and Gly-550. A Mg(2+)-binding site is contributed by Asn-551. Ser-553 provides a ligand contact to substrate.

The protein belongs to the FGAMS family. As to quaternary structure, monomer. Part of the FGAM synthase complex composed of 1 PurL, 1 PurQ and 2 PurS subunits.

The protein localises to the cytoplasm. It catalyses the reaction N(2)-formyl-N(1)-(5-phospho-beta-D-ribosyl)glycinamide + L-glutamine + ATP + H2O = 2-formamido-N(1)-(5-O-phospho-beta-D-ribosyl)acetamidine + L-glutamate + ADP + phosphate + H(+). It participates in purine metabolism; IMP biosynthesis via de novo pathway; 5-amino-1-(5-phospho-D-ribosyl)imidazole from N(2)-formyl-N(1)-(5-phospho-D-ribosyl)glycinamide: step 1/2. Functionally, part of the phosphoribosylformylglycinamidine synthase complex involved in the purines biosynthetic pathway. Catalyzes the ATP-dependent conversion of formylglycinamide ribonucleotide (FGAR) and glutamine to yield formylglycinamidine ribonucleotide (FGAM) and glutamate. The FGAM synthase complex is composed of three subunits. PurQ produces an ammonia molecule by converting glutamine to glutamate. PurL transfers the ammonia molecule to FGAR to form FGAM in an ATP-dependent manner. PurS interacts with PurQ and PurL and is thought to assist in the transfer of the ammonia molecule from PurQ to PurL. The chain is Phosphoribosylformylglycinamidine synthase subunit PurL from Corynebacterium glutamicum (strain R).